A 267-amino-acid polypeptide reads, in one-letter code: Phosphate import ATP-binding protein PstB (267 aa).

Positions Val21–Ile262 constitute an ABC transporter domain. Gly53 to Ser60 contacts ATP.

Belongs to the ABC transporter superfamily. Phosphate importer (TC 3.A.1.7) family. In terms of assembly, the complex is composed of two ATP-binding proteins (PstB), two transmembrane proteins (PstC and PstA) and a solute-binding protein (PstS).

The protein localises to the cell inner membrane. It catalyses the reaction phosphate(out) + ATP + H2O = ADP + 2 phosphate(in) + H(+). Part of the ABC transporter complex PstSACB involved in phosphate import. Responsible for energy coupling to the transport system. In Xanthomonas campestris pv. campestris (strain 8004), this protein is Phosphate import ATP-binding protein PstB.